Here is a 185-residue protein sequence, read N- to C-terminus: Ribosome-recycling factor (185 aa).

This sequence belongs to the RRF family.

It localises to the cytoplasm. In terms of biological role, responsible for the release of ribosomes from messenger RNA at the termination of protein biosynthesis. May increase the efficiency of translation by recycling ribosomes from one round of translation to another. The sequence is that of Ribosome-recycling factor from Ehrlichia chaffeensis (strain ATCC CRL-10679 / Arkansas).